We begin with the raw amino-acid sequence, 557 residues long: Tight junction-associated protein 1 (557 aa).

The tract at residues 1 to 37 (MTSAAPAKKPYRKAPPEHRELRLEIPGSRLEQEEPLT) is disordered. Threonine 2 is subject to N-acetylthreonine. Basic and acidic residues predominate over residues 14 to 23 (APPEHRELRL). The stretch at 42-171 (MKLLQEENEE…EELNERYRLD (130 aa)) forms a coiled coil. Disordered regions lie at residues 266 to 303 (MSEGVPGDPASPPAPGSPTPQPNGECHSLGTARGSPEE) and 309 to 328 (AFEKLNPYPTPSPPHPLYPG). Over residues 274-286 (PASPPAPGSPTPQ) the composition is skewed to pro residues. At serine 300 the chain carries Phosphoserine. Positions 316 to 325 (YPTPSPPHPL) are enriched in pro residues. Residue threonine 318 is modified to Phosphothreonine. Phosphoserine occurs at positions 320 and 345. The interval 364–409 (EEGSERARPSPVPSTPASAQASPHHQPSPAPLTLSAPASSASSEED) is disordered. Polar residues predominate over residues 378–388 (TPASAQASPHH). Over residues 394 to 405 (PLTLSAPASSAS) the composition is skewed to low complexity. The residue at position 422 (threonine 422) is a Phosphothreonine. Positions 439 to 456 (LPELQRHFAHSPADRDEV) are enriched in basic and acidic residues. Positions 439–557 (LPELQRHFAH…QAQEQGNLLN (119 aa)) are disordered. Serine 491 carries the post-translational modification Phosphoserine. Positions 530-542 (RSPKRMGVHHLHR) are enriched in basic residues. Residue serine 545 is modified to Phosphoserine. Positions 546–557 (LTQAQEQGNLLN) are enriched in polar residues.

Interacts with DLG1. Interacts with ARF6 (GTP-bound form). As to expression, ubiquitously expressed.

The protein localises to the golgi apparatus. It is found in the trans-Golgi network. It localises to the cell junction. Its subcellular location is the tight junction. The protein resides in the cell membrane. Its function is as follows. Plays a role in regulating the structure of the Golgi apparatus. In Homo sapiens (Human), this protein is Tight junction-associated protein 1.